A 1400-amino-acid chain; its full sequence is Tensin-2 (1400 aa).

A Phorbol-ester/DAG-type zinc finger spans residues 31–79 (PHSFREKVFRKKTPVCAVCKVTIDGTGVSCRVCKVATHRKCEAKVTSSC). At threonine 91 the chain carries Phosphothreonine. Phosphoserine is present on residues serine 118 and serine 120. The 173-residue stretch at 122–294 (DPLMERRWDL…SYFSGLLSGS (173 aa)) folds into the Phosphatase tensin-type domain. The active-site Phosphocysteine intermediate is the cysteine 231. Positions 299 to 425 (SSPLFLHYVF…ASVEFVFSSS (127 aa)) constitute a C2 tensin-type domain. Residues 425 to 444 (SPEKVKGNTPRNDPSVSVDY) form a disordered region. Residues 433 to 444 (TPRNDPSVSVDY) are compositionally biased toward polar residues. Serine 455 carries the post-translational modification Phosphoserine. Tyrosine 456 bears the Phosphotyrosine mark. A Phosphoserine modification is found at serine 466. A Phosphothreonine modification is found at threonine 474. Serine 481 bears the Phosphoserine mark. Residue tyrosine 483 is modified to Phosphotyrosine. Residues 488-536 (RVPRQTPPAPSPELPPPPMLSVSSDSGHSSTLTTEHTAESPGRPPPTAA) are disordered. Pro residues predominate over residues 492 to 506 (QTPPAPSPELPPPPM). Arginine 555 carries the omega-N-methylarginine modification. The disordered stretch occupies residues 809–1114 (CGSPSEGRGY…DVTQPPEHPL (306 aa)). Serine 820, serine 825, serine 830, serine 832, and serine 835 each carry phosphoserine. Polar residues-rich tracts occupy residues 898-917 (CSASSELSGPSTPLHTSSPV) and 929-940 (TRSPSLAPTQRL). Threonine 909 bears the Phosphothreonine mark. Phosphoserine occurs at positions 931, 941, and 972. A Phosphothreonine modification is found at threonine 977. A phosphoserine mark is found at serine 991 and serine 1003. Residues 1046–1056 (PEPPQSSPTPA) show a composition bias toward pro residues. The span at 1082-1098 (SGQQPSPPARSTNQHVT) shows a compositional bias: polar residues. Serine 1087 carries the post-translational modification Phosphoserine. One can recognise an SH2 domain in the interval 1131–1238 (WYKPHLSRDQ…SLPCCLRIPS (108 aa)). Residue threonine 1173 is modified to Phosphothreonine. A Phosphoserine modification is found at serine 1238. One can recognise a PTB domain in the interval 1266 to 1399 (ACSVLYLTSV…FITKVLLGQR (134 aa)).

Belongs to the PTEN phosphatase protein family. Interacts with AXL. Interacts with SYK; leading to its phosphorylation. Interacts with SQSTM1 (via PB1 domain); the interaction leads to sequestration of TNS2 in cytoplasmic aggregates with SQSTM1 and promotes TNS2 ubiquitination and proteasomal degradation. Post-translationally, ubiquitinated following sequestration in cytoplasmic aggregates with SQSTM1, leading to proteasomal degradation. In the adult kidney, expressed mainly in glomeruli (at protein level). In the newborn kidney, localizes on the basal surface of podocytes along the glomerular basement membrane and not in endothelial cells. Low expression levels in anabolic skeletal muscles.

Its subcellular location is the cell junction. It localises to the focal adhesion. The protein localises to the cell membrane. The protein resides in the cytoplasm. It catalyses the reaction O-phospho-L-tyrosyl-[protein] + H2O = L-tyrosyl-[protein] + phosphate. Tyrosine-protein phosphatase which regulates cell motility, proliferation and muscle-response to insulin. Phosphatase activity is mediated by binding to phosphatidylinositol-3,4,5-triphosphate (PtdIns(3,4,5)P3) via the SH2 domain. In muscles and under catabolic conditions, dephosphorylates IRS1 leading to its degradation and muscle atrophy. Negatively regulates PI3K-AKT pathway activation. Dephosphorylates nephrin NPHS1 in podocytes which affects mTORC1 complex activity. Under normal glucose conditions, NPHS1 outcompetes IRS1 for binding to phosphatidylinositol 3-kinase (PI3K) which balances mTORC1 activity but high glucose conditions lead to up-regulation of TNS2, increased NPHS1 dephosphorylation and activation of mTORC1, contributing to podocyte hypertrophy and proteinuria. Required for correct podocyte morphology, podocyte-glomerular basement membrane interaction and integrity of the glomerular filtration barrier. Enhances RHOA activation in the presence of DLC1. Plays a role in promoting DLC1-dependent remodeling of the extracellular matrix. The chain is Tensin-2 (Tns2) from Mus musculus (Mouse).